Consider the following 443-residue polypeptide: Phosphoglucosamine mutase (443 aa).

Serine 101 functions as the Phosphoserine intermediate in the catalytic mechanism. Mg(2+) is bound by residues serine 101, aspartate 239, aspartate 241, and aspartate 243. Serine 101 is subject to Phosphoserine.

The protein belongs to the phosphohexose mutase family. Requires Mg(2+) as cofactor. In terms of processing, activated by phosphorylation.

It carries out the reaction alpha-D-glucosamine 1-phosphate = D-glucosamine 6-phosphate. Catalyzes the conversion of glucosamine-6-phosphate to glucosamine-1-phosphate. The protein is Phosphoglucosamine mutase of Francisella tularensis subsp. holarctica (strain FTNF002-00 / FTA).